The following is a 305-amino-acid chain: DNA-directed RNA polymerase 35 kDa subunit (305 aa).

The protein belongs to the poxviridae DNA-directed RNA polymerase 35 kDa subunit family. In terms of assembly, the DNA-dependent RNA polymerase used for intermediate and late genes expression consists of eight subunits 147 kDa, 133 kDa, 35 kDa, 30 kDa, 22 kDa, 19 kDa, 18 kDa and 7 kDa totalling more than 500 kDa in mass. The same holoenzyme, with the addition of the transcription-specificity factor RAP94, is used for early gene expression.

It is found in the virion. The catalysed reaction is RNA(n) + a ribonucleoside 5'-triphosphate = RNA(n+1) + diphosphate. Its function is as follows. Part of the DNA-dependent RNA polymerase which catalyzes the transcription of viral DNA into RNA using the four ribonucleoside triphosphates as substrates. Responsible for the transcription of early, intermediate and late genes. DNA-dependent RNA polymerase associates with the early transcription factor (ETF), itself composed of D6 and A7, thereby allowing the early genes transcription. Late transcription, and probably also intermediate transcription, require newly synthesized RNA polymerase. The chain is DNA-directed RNA polymerase 35 kDa subunit (OPG156) from Homo sapiens (Human).